The primary structure comprises 581 residues: Interleukin-22 receptor subunit alpha-1 (581 aa).

A signal peptide spans 1–15 (MRTLLTILAAGSLLA). Over 16 to 228 (HITEDTSDLL…VKTLPDRTWT (213 aa)) the chain is Extracellular. Fibronectin type-III domains lie at 18 to 115 (TEDT…RFSS) and 141 to 221 (PTYT…RVKT). A disulfide bond links Cys71 and Cys79. Residue Asn80 is glycosylated (N-linked (GlcNAc...) asparagine). Cys128 and Cys217 are joined by a disulfide. The helical transmembrane segment at 229 to 249 (YSFSGAFLFSLGFLVAGLCYL) threads the bilayer. Residues 250–581 (SYRYITKPPP…GLALTVQWES (332 aa)) are Cytoplasmic-facing. Disordered regions lie at residues 354-493 (QAAP…SSLK) and 539-563 (PSDE…LESP). A compositionally biased stretch (polar residues) spans 378 to 389 (TPQAVSETQLPS). Residues Ser410 and Ser414 each carry the phosphoserine modification. The segment covering 440–449 (CSPTGLSLQE) has biased composition (polar residues).

The protein belongs to the type II cytokine receptor family. Heterodimer with IL10RB and with IL20RB. Interacts with FBXW12; the interaction promotes ubiquitination of IL22RA1. Post-translationally, ubiquitinated.

The protein localises to the cell membrane. Its function is as follows. Component of the receptor for IL20, IL22 and IL24. Component of IL22 receptor formed by IL22RA1 and IL10RB enabling IL22 signaling via JAK/STAT pathways. IL22 also induces activation of MAPK1/MAPK3 and Akt kinases pathways. Component of one of the receptor for IL20 and IL24 formed by IL22RA1 and IL20RB also signaling through STATs activation. Mediates IL24 antiangiogenic activity as well as IL24 inhibitory effect on endothelial cell tube formation and differentiation. The polypeptide is Interleukin-22 receptor subunit alpha-1 (IL22RA1) (Bos taurus (Bovine)).